A 261-amino-acid polypeptide reads, in one-letter code: Prostatic glandular kallikrein-6 (261 aa).

The N-terminal stretch at M1–A18 is a signal peptide. Positions P19–R24 are cleaved as a propeptide — activation peptide. Residues I25–K258 form the Peptidase S1 domain. Intrachain disulfides connect C31–C173, C50–C66, C152–C219, C184–C198, and C209–C234. Catalysis depends on H65, which acts as the Charge relay system. N-linked (GlcNAc...) asparagine glycosylation occurs at N108. D120 serves as the catalytic Charge relay system. The Charge relay system role is filled by S213.

The protein belongs to the peptidase S1 family. Kallikrein subfamily.

It carries out the reaction Preferential cleavage of Arg-|-Xaa bonds in small molecule substrates. Highly selective action to release kallidin (lysyl-bradykinin) from kininogen involves hydrolysis of Met-|-Xaa or Leu-|-Xaa.. Functionally, glandular kallikreins cleave Met-Lys and Arg-Ser bonds in kininogen to release Lys-bradykinin. In Rattus norvegicus (Rat), this protein is Prostatic glandular kallikrein-6 (Klk6).